A 212-amino-acid chain; its full sequence is Ribosomal RNA small subunit methyltransferase G (212 aa).

S-adenosyl-L-methionine contacts are provided by residues G80, L85, 131–132 (AE), and R146.

This sequence belongs to the methyltransferase superfamily. RNA methyltransferase RsmG family.

The protein resides in the cytoplasm. It carries out the reaction guanosine(527) in 16S rRNA + S-adenosyl-L-methionine = N(7)-methylguanosine(527) in 16S rRNA + S-adenosyl-L-homocysteine. In terms of biological role, specifically methylates the N7 position of guanine in position 527 of 16S rRNA. In Xanthomonas campestris pv. campestris (strain 8004), this protein is Ribosomal RNA small subunit methyltransferase G.